The primary structure comprises 950 residues: Leucine--tRNA ligase (950 aa).

The 'HIGH' region signature appears at 41-52 (PYPSGDGLHVGH). The 'KMSKS' region motif lies at 718–722 (KMSKS). Lys721 is a binding site for ATP.

It belongs to the class-I aminoacyl-tRNA synthetase family.

Its subcellular location is the cytoplasm. The enzyme catalyses tRNA(Leu) + L-leucine + ATP = L-leucyl-tRNA(Leu) + AMP + diphosphate. This Rhodopirellula baltica (strain DSM 10527 / NCIMB 13988 / SH1) protein is Leucine--tRNA ligase.